Here is a 200-residue protein sequence, read N- to C-terminus: Adenylate kinase (200 aa).

10 to 15 serves as a coordination point for ATP; that stretch reads GAGKGT. Residues 30–59 are NMP; the sequence is STGDLFRANISQQTELGKLAKSYMDAGNLV. AMP is bound by residues Thr-31, Arg-36, 57–59, 84–87, and Gln-91; these read NLV and GFPR. The tract at residues 125–163 is LID; that stretch reads GRRVCRNDSAHVFHVTYTPPKKEGVCDVCGGELYQRDDD. ATP contacts are provided by residues Arg-126 and 136 to 137; that span reads VF. Residues Arg-160 and Arg-171 each coordinate AMP.

The protein belongs to the adenylate kinase family. Monomer.

It localises to the cytoplasm. The catalysed reaction is AMP + ATP = 2 ADP. It functions in the pathway purine metabolism; AMP biosynthesis via salvage pathway; AMP from ADP: step 1/1. Its function is as follows. Catalyzes the reversible transfer of the terminal phosphate group between ATP and AMP. Plays an important role in cellular energy homeostasis and in adenine nucleotide metabolism. In Streptomyces lividans, this protein is Adenylate kinase.